Reading from the N-terminus, the 396-residue chain is 1-deoxy-D-xylulose 5-phosphate reductoisomerase (396 aa).

The NADPH site is built by T10, G11, S12, I13, N38, and N123. 1-deoxy-D-xylulose 5-phosphate is bound at residue K124. An NADPH-binding site is contributed by E125. D149 contacts Mn(2+). S150, E151, S185, and H208 together coordinate 1-deoxy-D-xylulose 5-phosphate. Mn(2+) is bound at residue E151. Position 214 (G214) interacts with NADPH. Residues S221, N226, K227, and E230 each coordinate 1-deoxy-D-xylulose 5-phosphate. A Mn(2+)-binding site is contributed by E230.

Belongs to the DXR family. Requires Mg(2+) as cofactor. Mn(2+) serves as cofactor.

It catalyses the reaction 2-C-methyl-D-erythritol 4-phosphate + NADP(+) = 1-deoxy-D-xylulose 5-phosphate + NADPH + H(+). It functions in the pathway isoprenoid biosynthesis; isopentenyl diphosphate biosynthesis via DXP pathway; isopentenyl diphosphate from 1-deoxy-D-xylulose 5-phosphate: step 1/6. Its function is as follows. Catalyzes the NADPH-dependent rearrangement and reduction of 1-deoxy-D-xylulose-5-phosphate (DXP) to 2-C-methyl-D-erythritol 4-phosphate (MEP). This is 1-deoxy-D-xylulose 5-phosphate reductoisomerase from Shewanella halifaxensis (strain HAW-EB4).